The chain runs to 323 residues: Prostaglandin F synthase 1 (323 aa).

NADP(+)-binding positions include 20–24 and Asp50; that span reads GFGTY. Tyr55 functions as the Proton donor in the catalytic mechanism. His117 is a substrate binding site. NADP(+) is bound by residues 166–167, Gln190, 216–221, and 270–280; these read SN, YAALGA, and KSFNKKRIKEN.

The protein belongs to the aldo/keto reductase family. Monomer. In terms of processing, the N-terminus is blocked.

Its subcellular location is the cytoplasm. It catalyses the reaction prostaglandin F2alpha + NADP(+) = prostaglandin D2 + NADPH + H(+). It functions in the pathway lipid metabolism; prostaglandin biosynthesis. Its function is as follows. Catalyzes the reduction of PGD(2) and PGH(2) to PGF(2 alpha) and a stereoisomer, respectively. It has a broad substrate specificity and also reduces other carbonyl compounds. The chain is Prostaglandin F synthase 1 from Bos taurus (Bovine).